A 223-amino-acid chain; its full sequence is Glutathione S-transferase 4 (223 aa).

Ala-2 carries the post-translational modification Blocked amino end (Ala). A GST N-terminal domain is found at 4–85 (PAVKVYGWAI…HVLRKHKPEL (82 aa)). Glutathione contacts are provided by residues Ser-14, 43 to 44 (HR), 56 to 57 (KV), and 69 to 70 (ES). The 134-residue stretch at 90 to 223 (RLEQTAMVDV…VGAGAPKEQE (134 aa)) folds into the GST C-terminal domain.

This sequence belongs to the GST superfamily. Phi family. In terms of assembly, homodimer or heterodimer of GST-I and GST-IV (=GST-II). In terms of tissue distribution, seedling roots.

It catalyses the reaction RX + glutathione = an S-substituted glutathione + a halide anion + H(+). Its function is as follows. Conjugation of reduced glutathione to a wide number of exogenous and endogenous hydrophobic electrophiles. Involved in the detoxification of certain herbicides. Most active with substrates possessing a chloroacetamide structure. Trans-cinnamic acid and 1-chloro-2,4-dinitrobenzene are not effective substrates. May play an important role in the benoxacor-mediated protection of maize from metolachlor injury. The chain is Glutathione S-transferase 4 (GST4) from Zea mays (Maize).